The following is a 1361-amino-acid chain: Xanthine dehydrogenase 1 (1361 aa).

One can recognise a 2Fe-2S ferredoxin-type domain in the interval 15-101 (TEALLYVNGV…GMHVISIEGL (87 aa)). Residues Cys53, Cys58, Cys61, Cys83, Cys123, Cys126, Cys159, and Cys161 each contribute to the [2Fe-2S] cluster site. In terms of domain architecture, FAD-binding PCMH-type spans 257–442 (RGNGGITWYR…LSVFLPWTRP (186 aa)). Residues 285–292 (LLVGNTEV), Phe365, 375–379 (CIGGN), Asp388, Leu432, and Lys450 each bind FAD. The Mo-molybdopterin site is built by Gln796 and Phe827. Positions 831 and 909 each coordinate substrate. Arg941 provides a ligand contact to Mo-molybdopterin. The substrate site is built by Phe943 and Thr1039. Ala1108 contributes to the Mo-molybdopterin binding site. The Proton acceptor role is filled by Glu1297.

It belongs to the xanthine dehydrogenase family. As to quaternary structure, homodimer. [2Fe-2S] cluster serves as cofactor. The cofactor is FAD. It depends on Mo-molybdopterin as a cofactor. As to expression, expressed in roots, leaves, stems, flowers and siliques.

It carries out the reaction xanthine + NAD(+) + H2O = urate + NADH + H(+). It catalyses the reaction hypoxanthine + NAD(+) + H2O = xanthine + NADH + H(+). Key enzyme involved in purine catabolism. Catalyzes the oxidation of hypoxanthine to xanthine and the oxidation of xanthine to urate. Regulates the level of ureides and plays an important role during plant growth and development, senescence and response to stresses. Possesses NADH oxidase activity and may contribute to the generation of superoxide anions in planta. This Arabidopsis thaliana (Mouse-ear cress) protein is Xanthine dehydrogenase 1 (XDH1).